Reading from the N-terminus, the 403-residue chain is Dual-specificity RNA methyltransferase RlmN (403 aa).

Residue Glu126 is the Proton acceptor of the active site. The Radical SAM core domain occupies 132 to 375; the sequence is ETDRGTLCVS…VRTPRGRDIL (244 aa). Cys139 and Cys378 are joined by a disulfide. Positions 146, 150, and 153 each coordinate [4Fe-4S] cluster. S-adenosyl-L-methionine is bound by residues 204-205, Ser236, 258-260, and Asn335; these read GE and SLH. The active-site S-methylcysteine intermediate is Cys378.

Belongs to the radical SAM superfamily. RlmN family. Requires [4Fe-4S] cluster as cofactor.

The protein localises to the cytoplasm. It carries out the reaction adenosine(2503) in 23S rRNA + 2 reduced [2Fe-2S]-[ferredoxin] + 2 S-adenosyl-L-methionine = 2-methyladenosine(2503) in 23S rRNA + 5'-deoxyadenosine + L-methionine + 2 oxidized [2Fe-2S]-[ferredoxin] + S-adenosyl-L-homocysteine. The enzyme catalyses adenosine(37) in tRNA + 2 reduced [2Fe-2S]-[ferredoxin] + 2 S-adenosyl-L-methionine = 2-methyladenosine(37) in tRNA + 5'-deoxyadenosine + L-methionine + 2 oxidized [2Fe-2S]-[ferredoxin] + S-adenosyl-L-homocysteine. Functionally, specifically methylates position 2 of adenine 2503 in 23S rRNA and position 2 of adenine 37 in tRNAs. m2A2503 modification seems to play a crucial role in the proofreading step occurring at the peptidyl transferase center and thus would serve to optimize ribosomal fidelity. The chain is Dual-specificity RNA methyltransferase RlmN from Bradyrhizobium sp. (strain BTAi1 / ATCC BAA-1182).